The sequence spans 146 residues: ATP synthase epsilon chain (146 aa).

The protein belongs to the ATPase epsilon chain family. F-type ATPases have 2 components, CF(1) - the catalytic core - and CF(0) - the membrane proton channel. CF(1) has five subunits: alpha(3), beta(3), gamma(1), delta(1), epsilon(1). CF(0) has three main subunits: a, b and c.

The protein resides in the cell membrane. In terms of biological role, produces ATP from ADP in the presence of a proton gradient across the membrane. This is ATP synthase epsilon chain from Lactobacillus helveticus (strain DPC 4571).